Reading from the N-terminus, the 119-residue chain is Protein Wnt-4 (119 aa).

Residue Ser-1 is the site of O-palmitoleoyl serine; by PORCN attachment. 2 disulfide bridges follow: Cys-69–Cys-100 and Cys-85–Cys-95. Asn-86 carries an N-linked (GlcNAc...) asparagine glycan.

It belongs to the Wnt family. Post-translationally, palmitoleoylation is required for efficient binding to frizzled receptors. Depalmitoleoylation leads to Wnt signaling pathway inhibition.

Its subcellular location is the secreted. The protein resides in the extracellular space. The protein localises to the extracellular matrix. Functionally, ligand for members of the frizzled family of seven transmembrane receptors. Plays an important role in embryonic development. This chain is Protein Wnt-4 (WNT-4), found in Sceloporus occidentalis (Western fence lizard).